The sequence spans 553 residues: Non-SCF-type F-box protein ROY1 (553 aa).

The F-box domain maps to 3–49; the sequence is FQDQDIFIVFSHASLFLNQNDLLSLSLTSKKMHDMIAIPRLYSNIHI.

As to quaternary structure, interacts with SKP1 and YPT32; SKP1 is required for the interaction with YPT32.

The protein resides in the cytoplasm. Its subcellular location is the nucleus. The protein localises to the cytoplasmic vesicle membrane. In terms of biological role, non-SCF-type F-box protein involved in the endocytic with the vacuolar sorting pathway. Acts as a repressor of YPT52 by inhibiting the formation of active, GTP-bound, YPT52. Involved in the defense mechanism against methylmercury toxicity. This chain is Non-SCF-type F-box protein ROY1 (ROY1), found in Saccharomyces cerevisiae (strain ATCC 204508 / S288c) (Baker's yeast).